Reading from the N-terminus, the 354-residue chain is Ferredoxin--NADP reductase, chloroplastic (354 aa).

A chloroplast-targeting transit peptide spans Met1–Ala35. One can recognise an FAD-binding FR-type domain in the interval Lys69–Leu198. Residues Lys118 and Lys124 each carry the N6,N6,N6-trimethyllysine modification. FAD is bound by residues Arg130–Ser133, Cys151–Arg153, and Tyr157. Residues Ser133 and Arg153 each coordinate NADP(+). Lys170 is subject to N6,N6-dimethyllysine. FAD contacts are provided by residues Leu172–Ser174 and Thr213. Residues Thr213, Val245–Gly246, Ser275–Arg276, Lys285, Gly313–Leu314, and Glu352 contribute to the NADP(+) site.

The protein belongs to the ferredoxin--NADP reductase type 1 family. Requires FAD as cofactor.

The protein resides in the plastid. Its subcellular location is the chloroplast stroma. It localises to the chloroplast thylakoid membrane. The enzyme catalyses 2 reduced [2Fe-2S]-[ferredoxin] + NADP(+) + H(+) = 2 oxidized [2Fe-2S]-[ferredoxin] + NADPH. It participates in energy metabolism; photosynthesis. Its function is as follows. May play a key role in regulating the relative amounts of cyclic and non-cyclic electron flow to meet the demands of the plant for ATP and reducing power. The sequence is that of Ferredoxin--NADP reductase, chloroplastic (PETH) from Chlamydomonas reinhardtii (Chlamydomonas smithii).